The following is a 688-amino-acid chain: PTS system glucoside-specific EIICBA component (688 aa).

The PTS EIIC type-1 domain occupies 3–427 (KKLFGQLQRI…FKLKTPGRED (425 aa)). Transmembrane regions (helical) follow at residues 12–32 (IGKA…LLAF), 81–101 (LGLA…YLIM), 137–157 (LVLG…MGAL), 182–202 (FVPI…SFAW), 223–243 (LTTF…LHHI), 284–304 (AFTT…AFAI), 315–335 (VVGG…ITEP), 340–360 (FLFV…TSFL), 364–384 (LLGV…ILYG), and 395–415 (LVIP…DFAI). Residues 438–519 (AKLPFDVLDA…AKIMSGEITK (82 aa)) enclose the PTS EIIB type-1 domain. Residue C460 is the Phosphocysteine intermediate; for EIIB activity of the active site. Residues 560 to 664 (DQVFAGKMMG…SIVTPMIITN (105 aa)) enclose the PTS EIIA type-1 domain. The Tele-phosphohistidine intermediate; for EIIA activity role is filled by H612.

Its subcellular location is the cell membrane. In terms of biological role, the phosphoenolpyruvate-dependent sugar phosphotransferase system (sugar PTS), a major carbohydrate active -transport system, catalyzes the phosphorylation of incoming sugar substrates concomitantly with their translocation across the cell membrane. This system is involved in alpha- and beta-glucoside transport. This Staphylococcus aureus (strain JH1) protein is PTS system glucoside-specific EIICBA component (glcB).